Consider the following 202-residue polypeptide: ATP-dependent Clp protease proteolytic subunit (202 aa).

Serine 101 serves as the catalytic Nucleophile. The active site involves histidine 126.

The protein belongs to the peptidase S14 family. Component of the chloroplastic Clp protease core complex.

It is found in the plastid. The protein localises to the chloroplast stroma. The enzyme catalyses Hydrolysis of proteins to small peptides in the presence of ATP and magnesium. alpha-casein is the usual test substrate. In the absence of ATP, only oligopeptides shorter than five residues are hydrolyzed (such as succinyl-Leu-Tyr-|-NHMec, and Leu-Tyr-Leu-|-Tyr-Trp, in which cleavage of the -Tyr-|-Leu- and -Tyr-|-Trp bonds also occurs).. In terms of biological role, cleaves peptides in various proteins in a process that requires ATP hydrolysis. Has a chymotrypsin-like activity. Plays a major role in the degradation of misfolded proteins. The protein is ATP-dependent Clp protease proteolytic subunit of Calycanthus floridus var. glaucus (Eastern sweetshrub).